Here is a 360-residue protein sequence, read N- to C-terminus: Putative F-box protein At3g47150 (360 aa).

One can recognise an F-box domain in the interval 6-56 (NTTQIYIPLDLQINILLRLPVKSLLRFRCVSKLWCSIITSHDFRNRHFNIT).

The polypeptide is Putative F-box protein At3g47150 (Arabidopsis thaliana (Mouse-ear cress)).